We begin with the raw amino-acid sequence, 666 residues long: Kinesin-like protein Nod (666 aa).

Positions 8 to 320 (AVRIAVREAP…LRFGTSAKKL (313 aa)) constitute a Kinesin motor domain. 87-94 (GQTGTGKS) serves as a coordination point for ATP. A disordered region spans residues 423-450 (GFHSDSDKDRHLMPPPTGQEPRQASSQN). Positions 639–666 (ENLFQVKSLPIWSGNKWERFCQINCLDT) form a coiled coil.

The protein belongs to the TRAFAC class myosin-kinesin ATPase superfamily. Kinesin family. In terms of tissue distribution, in adult female, found in meiotically active ovaries.

Its subcellular location is the cytoplasm. It is found in the cytoskeleton. Its function is as follows. Required for the distributive chromosome segregation of non-exchange chromosomes during meiosis. May be a microtubule motor required to hold distributively 'paired' chromosomes at the metaphase plate until anaphase. The sequence is that of Kinesin-like protein Nod (nod) from Drosophila melanogaster (Fruit fly).